A 732-amino-acid polypeptide reads, in one-letter code: MTCTLRDLNSLLEICCRCPAHNPSTAFAPTTKVRVSSDVRGIFALPVQKDHKPYNGLSPEHLETMKAVSLMLDAAGPKLEDGISKAKELLEERINPELMRDALGIYLTHSKDAQQRKIFPPPLKNHPFFSTKTRRPANVAGEICTADTLHGHALLSYWRDDYDLNDSHYYWHMVYRGAGGDNSKNVGDFDRHGEVFLYVHSQMVARYETESLCWSLPLVRPWNQYDDFLENGYAPISSLIEHYGGYPPFSTWYSIRNPDMPDTLNVTIPRARLEEWRDNIYAAIRKGQFETTSKDKPLVLTRDNCLNFVGGILDAQYPSLNKLLGGCSLDEERYGNLHNYGLGKFAEMAYRNKPGEKSPYGLTISNFGAPRDPCFWRWYKHLQYYGRLAATRYPQDITAHRAEVVLSNLVVRLQDRSSPHYLDGHITTFLGPPAVNFMESKAKLGHEPYEWNVQVKSCRRSPPSKENPQTLTLRLFIAAEDLMNDYHSWIEMDRATVQLTDESAITKVRLDTDSSVARKMGNYGEPDPRYASAVFRHGWPQNLMLPVGKVEGMPFVAFCIATDDGIPDPAPAPPFHHYHDPRGMGYPFNRAWTQLTEDSTGKASIRTIISNAELYPFITSTTFKIYRTTKFETKQIIQPTTVTWFNTIRGYFKDADRACMRSEYGYDLYNYDHVMLHADAILDATASKRMPLQMGKYTQDNPDPEHPLWTVKMCENFRAWLLNGCPKGTDPA.

Zn(2+) is bound by residues H168, H172, and H200.

The protein belongs to the tyrosinase family. The cofactor is Zn(2+).

The enzyme catalyses (-)-cyclopenine = viridicatin + methyl isocyanate + H(+). The catalysed reaction is (-)-4'-methoxycyclopenine = 4'-methoxyviridicatin + methyl isocyanate + H(+). The protein operates within secondary metabolite biosynthesis. It participates in alkaloid biosynthesis. It functions in the pathway mycotoxin biosynthesis. Its function is as follows. Cyclopenase; part of the gene cluster that mediates the biosynthesis of the aspoquinolone mycotoxins. Within the pathway, the cyclopenase asqI catalyzes the conversion of 4'-methoxycyclopenin into 4'-methoxyviridicatin. Cyclopenin can also be converted into viridicatin by asqI. The first step of the pathway is catalyzed by the nonribosomal peptide synthetase asqK that condenses anthranilic acid and O-methyl-L-tyrosine to produce 4'-methoxycyclopeptin. 4'-methoxycyclopeptin is then converted to 4'-methoxydehydrocyclopeptin by the ketoglutarate-dependent dioxygenase asqJ. AsqJ also converts its first product 4'-methoxydehydrocyclopeptin to 4'-methoxycyclopenin. The following conversion of 4'-methoxycyclopenin into 4'-methoxyviridicatin is catalyzed by the cyclopenase asqI. 4'-methoxyviridicatin is the precursor of quinolone natural products, and is further converted to quinolinone B. The prenyltransferase asqH1 then catalyzes the canonical Friedel-Crafts alkylation of quinolinone B with dimethylallyl cation to yield dimethylallyl quinolone, which is subjected to FAD-dependent dehydrogenation by the FAD-linked oxidoreductase asqF to yield conjugated aryl diene. The delta(3') double bond then serves as the site of the second alkylation with DMAPP catalyzed by the prenyltransferase asqH2 to yield a carbenium ion intermediate, which can be attacked by H(2)O to yield a styrenyl quinolone containing a C3'-hydroxyprenyl chain. The FAD-dependent monooxygenase asqG performs epoxidation of the terminal C7'-C8' olefin. Finally, after dehydratation of the epoxide at C3 by asqC, the quinolone epoxide rearrangement protein asqO catalyzes an enzymatic 3-exo-tet cyclization to yield the cyclopropyl-THF ring system in aspoquinolone. The polypeptide is Cyclopenase asqI (Emericella nidulans (strain FGSC A4 / ATCC 38163 / CBS 112.46 / NRRL 194 / M139) (Aspergillus nidulans)).